A 194-amino-acid polypeptide reads, in one-letter code: Phosphoheptose isomerase (194 aa).

One can recognise an SIS domain in the interval 37 to 194 (ISDSFKQGGK…LIEFEMAKDV (158 aa)). 52-54 (NGG) is a binding site for substrate. H61 and E65 together coordinate Zn(2+). Substrate contacts are provided by residues E65, 93 to 94 (ND), 119 to 121 (STS), S124, and Q172. 2 residues coordinate Zn(2+): Q172 and H180.

Belongs to the SIS family. GmhA subfamily. As to quaternary structure, homotetramer. Zn(2+) is required as a cofactor.

The protein resides in the cytoplasm. The catalysed reaction is 2 D-sedoheptulose 7-phosphate = D-glycero-alpha-D-manno-heptose 7-phosphate + D-glycero-beta-D-manno-heptose 7-phosphate. Its pathway is carbohydrate biosynthesis; D-glycero-D-manno-heptose 7-phosphate biosynthesis; D-glycero-alpha-D-manno-heptose 7-phosphate and D-glycero-beta-D-manno-heptose 7-phosphate from sedoheptulose 7-phosphate: step 1/1. Its function is as follows. Catalyzes the isomerization of sedoheptulose 7-phosphate in D-glycero-D-manno-heptose 7-phosphate. In Actinobacillus succinogenes (strain ATCC 55618 / DSM 22257 / CCUG 43843 / 130Z), this protein is Phosphoheptose isomerase.